The sequence spans 419 residues: UDP-N-acetylglucosamine 1-carboxyvinyltransferase (419 aa).

22–23 contributes to the phosphoenolpyruvate binding site; the sequence is KN. Residue arginine 93 coordinates UDP-N-acetyl-alpha-D-glucosamine. The active-site Proton donor is the cysteine 117. Position 117 is a 2-(S-cysteinyl)pyruvic acid O-phosphothioketal (cysteine 117). Residues aspartate 307 and isoleucine 329 each coordinate UDP-N-acetyl-alpha-D-glucosamine.

It belongs to the EPSP synthase family. MurA subfamily.

The protein localises to the cytoplasm. The enzyme catalyses phosphoenolpyruvate + UDP-N-acetyl-alpha-D-glucosamine = UDP-N-acetyl-3-O-(1-carboxyvinyl)-alpha-D-glucosamine + phosphate. Its pathway is cell wall biogenesis; peptidoglycan biosynthesis. Its function is as follows. Cell wall formation. Adds enolpyruvyl to UDP-N-acetylglucosamine. This chain is UDP-N-acetylglucosamine 1-carboxyvinyltransferase, found in Shewanella sediminis (strain HAW-EB3).